We begin with the raw amino-acid sequence, 122 residues long: Large ribosomal subunit protein uL14 (122 aa).

It belongs to the universal ribosomal protein uL14 family. In terms of assembly, part of the 50S ribosomal subunit. Forms a cluster with proteins L3 and L19. In the 70S ribosome, L14 and L19 interact and together make contacts with the 16S rRNA in bridges B5 and B8.

In terms of biological role, binds to 23S rRNA. Forms part of two intersubunit bridges in the 70S ribosome. This Paracoccus denitrificans (strain Pd 1222) protein is Large ribosomal subunit protein uL14.